The following is a 545-amino-acid chain: Serine/threonine-protein kinase PAK 1 (545 aa).

The interval M1 to I75 is disordered. S2 is subject to N-acetylserine. Phosphoserine; by PKB and autocatalysis is present on S21. S57 is modified (phosphoserine; by autocatalysis). Residues K70 to K140 form an autoregulatory region region. The region spanning I75–G88 is the CRIB domain. The GTPase-binding stretch occupies residues I75–R105. At T84 the chain carries Phosphothreonine; by OXSR1. S115 is modified (phosphoserine). Residues Y131 and Y142 each carry the phosphotyrosine modification. Residues S144 and S149 each carry the phosphoserine; by autocatalysis modification. A disordered region spans residues A150–K198. Residues D152–E166 are compositionally biased toward polar residues. The residue at position 153 (Y153) is a Phosphotyrosine; by JAK2. Position 174 is a phosphoserine (S174). A compositionally biased stretch (acidic residues) spans S174–A184. T185 is subject to Phosphothreonine. Phosphoserine; by autocatalysis is present on S199. Phosphotyrosine; by JAK2 is present on Y201. Residue S204 is modified to Phosphoserine; by autocatalysis. Residues P210–D250 form a disordered region. Residues T212 and T219 each carry the phosphothreonine modification. A phosphoserine mark is found at S220 and S223. The segment covering S220–P231 has biased composition (polar residues). 3 positions are modified to phosphothreonine: T225, T229, and T230. A Protein kinase domain is found at Y270 to L521. Residue I276–V284 participates in ATP binding. Y285 is modified (phosphotyrosine; by JAK2). Residue K299 participates in ATP binding. D389 acts as the Proton acceptor in catalysis. The residue at position 423 (T423) is a Phosphothreonine; by autocatalysis, BRSK2 and PDPK1.

This sequence belongs to the protein kinase superfamily. STE Ser/Thr protein kinase family. STE20 subfamily. In terms of assembly, homodimer in its autoinhibited state. Active as monomer. Interacts with GIT1. Component of cytoplasmic complexes, which also contains PXN, ARHGEF7 and GIT1. Interacts with NISCH. Interacts with DVL1; mediates the formation of a DVL1, MUSK and PAK1 ternary complex involved in AChR clustering. Binds to the caspase-cleaved p110 isoform of CDC2L1 and CDC2L2, p110C, but not the full-length proteins. Interacts with ARHGEF7. Interacts tightly with GTP-bound but not GDP-bound CDC42/P21 and RAC1. Interacts with SCRIB. Interacts with PDPK1. Interacts (via kinase domain) with RAF1. Interacts with NCK1 and NCK2. Interacts with TBCB. Interacts with BRSK2. Interacts with SNAI1. Interacts with CIB1 (via N-terminal region); the interaction is direct, promotes PAK1 activity and occurs in a calcium-dependent manner. Interacts with INPP5K. Interacts with gamma-tubulin. Interacts with RHOU; the interaction promotes PAK1 activation. The cofactor is Mg(2+). Post-translationally, autophosphorylated in trans, meaning that in a dimer, one kinase molecule phosphorylates the other one. Activated by autophosphorylation at Thr-423 in response to a conformation change, triggered by interaction with GTP-bound CDC42 or RAC1. Activated by phosphorylation at Thr-423 by BRSK2 and by PDPK1. Phosphorylated by JAK2 in response to PRL; this increases PAK1 kinase activity. Phosphorylated at Ser-21 by PKB/AKT; this reduces interaction with NCK1 and association with focal adhesion sites. Upon DNA damage, phosphorylated at Thr-212 and translocates to the nucleoplasm. Phosphorylated at tyrosine residues, which can be enhanced by NTN1.

The protein localises to the cytoplasm. Its subcellular location is the cell junction. It localises to the focal adhesion. It is found in the cell projection. The protein resides in the lamellipodium. The protein localises to the cell membrane. Its subcellular location is the ruffle membrane. It localises to the invadopodium. It is found in the nucleus. The protein resides in the nucleoplasm. The protein localises to the chromosome. Its subcellular location is the cytoskeleton. It localises to the microtubule organizing center. It is found in the centrosome. It carries out the reaction L-seryl-[protein] + ATP = O-phospho-L-seryl-[protein] + ADP + H(+). The catalysed reaction is L-threonyl-[protein] + ATP = O-phospho-L-threonyl-[protein] + ADP + H(+). Its activity is regulated as follows. Phosphorylation of Thr-84 by OXSR1 inhibits activation. Activated by binding small G proteins. Binding of GTP-bound CDC42 or RAC1 to the autoregulatory region releases monomers from the autoinhibited dimer, and enables activation by phosphorylation of Thr-423. Its function is as follows. Protein kinase involved in intracellular signaling pathways downstream of integrins and receptor-type kinases that plays an important role in cytoskeleton dynamics, in cell adhesion, migration, proliferation, apoptosis, mitosis, and in vesicle-mediated transport processes. Can directly phosphorylate BAD and protects cells against apoptosis. Activated by interaction with CDC42 and RAC1. Functions as a GTPase effector that links the Rho-related GTPases CDC42 and RAC1 to the JNK MAP kinase pathway. Phosphorylates and activates MAP2K1, and thereby mediates activation of downstream MAP kinases. Involved in the reorganization of the actin cytoskeleton, actin stress fibers and of focal adhesion complexes. Phosphorylates the tubulin chaperone TBCB and thereby plays a role in the regulation of microtubule biogenesis and organization of the tubulin cytoskeleton. Plays a role in the regulation of insulin secretion in response to elevated glucose levels. Part of a ternary complex that contains PAK1, DVL1 and MUSK that is important for MUSK-dependent regulation of AChR clustering during the formation of the neuromuscular junction (NMJ). Activity is inhibited in cells undergoing apoptosis, potentially due to binding of CDC2L1 and CDC2L2. Phosphorylates MYL9/MLC2. Phosphorylates RAF1 at 'Ser-338' and 'Ser-339' resulting in: activation of RAF1, stimulation of RAF1 translocation to mitochondria, phosphorylation of BAD by RAF1, and RAF1 binding to BCL2. Phosphorylates SNAI1 at 'Ser-246' promoting its transcriptional repressor activity by increasing its accumulation in the nucleus. In podocytes, promotes NR3C2 nuclear localization. Required for atypical chemokine receptor ACKR2-induced phosphorylation of LIMK1 and cofilin (CFL1) and for the up-regulation of ACKR2 from endosomal compartment to cell membrane, increasing its efficiency in chemokine uptake and degradation. In synapses, seems to mediate the regulation of F-actin cluster formation performed by SHANK3, maybe through CFL1 phosphorylation and inactivation. Plays a role in RUFY3-mediated facilitating gastric cancer cells migration and invasion. In response to DNA damage, phosphorylates MORC2 which activates its ATPase activity and facilitates chromatin remodeling. In neurons, plays a crucial role in regulating GABA(A) receptor synaptic stability and hence GABAergic inhibitory synaptic transmission through its role in F-actin stabilization. In hippocampal neurons, necessary for the formation of dendritic spines and excitatory synapses; this function is dependent on kinase activity and may be exerted by the regulation of actomyosin contractility through the phosphorylation of myosin II regulatory light chain (MLC). Along with GIT1, positively regulates microtubule nucleation during interphase. Phosphorylates FXR1, promoting its localization to stress granules and activity. Phosphorylates ILK on 'Thr-173' and 'Ser-246', promoting nuclear export of ILK. The sequence is that of Serine/threonine-protein kinase PAK 1 from Mus musculus (Mouse).